Reading from the N-terminus, the 145-residue chain is uncharacterized protein (145 aa).

Transmembrane regions (helical) follow at residues 3–23 (VGII…GIGG), 83–103 (YVID…YLVP), and 105–125 (LSLL…MLWI).

The protein resides in the cell membrane. This is an uncharacterized protein from Methanocaldococcus jannaschii (strain ATCC 43067 / DSM 2661 / JAL-1 / JCM 10045 / NBRC 100440) (Methanococcus jannaschii).